We begin with the raw amino-acid sequence, 66 residues long: Surface composition regulator (66 aa).

The protein belongs to the GlgS family.

In terms of biological role, major determinant of cell surface composition. Negatively regulates motility, adhesion and synthesis of biofilm exopolysaccharides. The polypeptide is Surface composition regulator (Escherichia coli O139:H28 (strain E24377A / ETEC)).